Reading from the N-terminus, the 176-residue chain is Nudix hydrolase 18, mitochondrial (176 aa).

Residues 1 to 21 constitute a mitochondrion transit peptide; the sequence is MVCLVSRTGRQSQRYNKGRRQ. The Nudix hydrolase domain maps to 22 to 153; that stretch reads VVGCIPYRLK…WMKEALDVLV (132 aa). A Nudix box motif is present at residues 60 to 81; it reads GGWELDESVEEAASRESLEEAG. Mg(2+)-binding residues include E75 and E79.

Belongs to the Nudix hydrolase family. Requires Mg(2+) as cofactor. Mn(2+) serves as cofactor. As to expression, expressed in roots, stems and inflorescences.

It localises to the mitochondrion. Functionally, probably mediates the hydrolysis of some nucleoside diphosphate derivatives. This is Nudix hydrolase 18, mitochondrial (NUDT18) from Arabidopsis thaliana (Mouse-ear cress).